Here is a 535-residue protein sequence, read N- to C-terminus: High-affinity fructose transporter ght6 (535 aa).

The Cytoplasmic segment spans residues 1 to 9; that stretch reads MAKILTIVM. The helical transmembrane segment at 10 to 30 threads the bilayer; it reads LVFVSMAGWMFGADTGSIGGI. Residues 31–58 lie on the Extracellular side of the membrane; it reads TNMRDFQSRYADRYDPVTDTYSYSSARQ. Residues 59–79 form a helical membrane-spanning segment; sequence GLLVGMVNTGTTVGCLLSSPL. At 80-87 the chain is on the cytoplasmic side; the sequence is GDRFGKRK. Residues 88–108 traverse the membrane as a helical segment; the sequence is CIMGWTLVYITGVIVQLTTIP. The Extracellular segment spans residues 109–112; it reads SWVQ. The chain crosses the membrane as a helical span at residues 113–133; sequence MMVAKIWTGLGIGALSVIAPG. Topologically, residues 134–144 are cytoplasmic; it reads YQSESSPPHIR. The helical transmembrane segment at 145-165 threads the bilayer; sequence GAIVTTYQLFITLGIFIAACI. The Extracellular segment spans residues 166–181; the sequence is NMGTHKYTTHPEAQWR. Residues 182–202 traverse the membrane as a helical segment; sequence VPIGINLLWGILMFFGMLFLP. Residues 203 to 268 lie on the Cytoplasmic side of the membrane; it reads ESPRYLAVKG…IFSNEIRYRT (66 aa). A helical membrane pass occupies residues 269-287; it reads LLGMGVMAFQQLTGNNYFF. The Extracellular segment spans residues 288 to 303; that stretch reads YYGTQVFRGTGLNSPF. The chain crosses the membrane as a helical span at residues 304–324; sequence LAALILDAVNFGCTFGAIFVL. Topologically, residues 325–330 are cytoplasmic; that stretch reads EYFGRR. A helical transmembrane segment spans residues 331-351; the sequence is GPLIVGGVWQSICFFIYASVG. Residues 352 to 365 lie on the Extracellular side of the membrane; the sequence is DRALTRPNGTSNHR. An N-linked (GlcNAc...) asparagine glycan is attached at asparagine 359. A helical membrane pass occupies residues 366–386; that stretch reads AGAVMIVFSCLFIFSFAQTWA. Residues 387 to 406 lie on the Cytoplasmic side of the membrane; that stretch reads PAAYVIVGESYPIRYRSKCA. A helical membrane pass occupies residues 407-427; sequence AVATASNWFWNFMISFFTPFI. Residues 428–434 are Extracellular-facing; it reads SNSIGFK. The chain crosses the membrane as a helical span at residues 435–455; that stretch reads YGYVFAACNLCAAIIIFLFAK. Over 456–535 the chain is Cytoplasmic; that stretch reads ETKGLTLEEI…PQQVTNPVGL (80 aa). Basic and acidic residues predominate over residues 484–508; sequence DREDIKQSDSEKERGPTSKLHEYVE. The disordered stretch occupies residues 484-535; the sequence is DREDIKQSDSEKERGPTSKLHEYVEHAPNSYASTHSTESENYPQQVTNPVGL. The segment covering 513 to 535 has biased composition (polar residues); that stretch reads SYASTHSTESENYPQQVTNPVGL.

The protein belongs to the major facilitator superfamily. Sugar transporter (TC 2.A.1.1) family.

It localises to the membrane. Functionally, high-affinity fructose transporter. This is High-affinity fructose transporter ght6 (ght6) from Schizosaccharomyces pombe (strain 972 / ATCC 24843) (Fission yeast).